Consider the following 134-residue polypeptide: DNA-directed RNA polymerase subunit omega (134 aa).

The protein belongs to the RNA polymerase subunit omega family. The RNAP catalytic core consists of 2 alpha, 1 beta, 1 beta' and 1 omega subunit. When a sigma factor is associated with the core the holoenzyme is formed, which can initiate transcription.

The enzyme catalyses RNA(n) + a ribonucleoside 5'-triphosphate = RNA(n+1) + diphosphate. In terms of biological role, promotes RNA polymerase assembly. Latches the N- and C-terminal regions of the beta' subunit thereby facilitating its interaction with the beta and alpha subunits. In Brucella anthropi (strain ATCC 49188 / DSM 6882 / CCUG 24695 / JCM 21032 / LMG 3331 / NBRC 15819 / NCTC 12168 / Alc 37) (Ochrobactrum anthropi), this protein is DNA-directed RNA polymerase subunit omega.